Reading from the N-terminus, the 396-residue chain is MSVRLVLAKGREKSLLRRHPWVFSGAVARMEGKASLGETIDIVDHQGKWLARGAYSPASQIRARVWTFDPSESIDIAFFSRRLQQAQKWRDWLAQKDGLDSYRLIAGESDGLPGITIDRFGNFLVLQLLSAGAEYQRAALISALQTLYPECAIYDRSDVAVRKKEGMELTQGLVTGELPPALLPIEEHGMKLLVDIQHGHKTGYYLDQRDSRLATRRYVENKRVLNCFSYTGGFAVSALMGGCSQVVSVDTSQEALDIARQNVELNKLDLSKAEFVRDDVFKLLRTYRDRGEKFDVIVMDPPKFVENKSQLMGACRGYKDINMLAIQLLNEGGILLTFSCSGLMTSDLFQKIIADAAIDAGRDVQFIEQFRQAADHPVIATYPEGLYLKGFACRVM.

The 80-residue stretch at 2–81 (SVRLVLAKGR…ESIDIAFFSR (80 aa)) folds into the PUA domain.

Belongs to the methyltransferase superfamily. RlmI family.

The protein resides in the cytoplasm. The catalysed reaction is cytidine(1962) in 23S rRNA + S-adenosyl-L-methionine = 5-methylcytidine(1962) in 23S rRNA + S-adenosyl-L-homocysteine + H(+). Its function is as follows. Specifically methylates the cytosine at position 1962 (m5C1962) of 23S rRNA. This chain is Ribosomal RNA large subunit methyltransferase I, found in Escherichia coli O157:H7.